The following is a 474-amino-acid chain: tRNA-2-methylthio-N(6)-dimethylallyladenosine synthase (474 aa).

Positions 3 to 120 (KKLLIKTWGC…LPEMIKQSQT (118 aa)) constitute an MTTase N-terminal domain. Residues Cys12, Cys49, Cys83, Cys157, Cys161, and Cys164 each contribute to the [4Fe-4S] cluster site. The Radical SAM core domain maps to 143–375 (RAEGATAFVS…QQTINAQAMR (233 aa)). In terms of domain architecture, TRAM spans 378 to 441 (RLMLATEQRV…ANSLRGELVR (64 aa)).

Belongs to the methylthiotransferase family. MiaB subfamily. Monomer. Requires [4Fe-4S] cluster as cofactor.

The protein localises to the cytoplasm. The enzyme catalyses N(6)-dimethylallyladenosine(37) in tRNA + (sulfur carrier)-SH + AH2 + 2 S-adenosyl-L-methionine = 2-methylsulfanyl-N(6)-dimethylallyladenosine(37) in tRNA + (sulfur carrier)-H + 5'-deoxyadenosine + L-methionine + A + S-adenosyl-L-homocysteine + 2 H(+). Its function is as follows. Catalyzes the methylthiolation of N6-(dimethylallyl)adenosine (i(6)A), leading to the formation of 2-methylthio-N6-(dimethylallyl)adenosine (ms(2)i(6)A) at position 37 in tRNAs that read codons beginning with uridine. This is tRNA-2-methylthio-N(6)-dimethylallyladenosine synthase from Vibrio parahaemolyticus serotype O3:K6 (strain RIMD 2210633).